The sequence spans 1193 residues: DNA-directed RNA polymerase subunit beta (1193 aa).

The tract at residues 1173–1193 (QQAKEAAELEKAKEEALDKTE) is disordered. Positions 1177 to 1193 (EAAELEKAKEEALDKTE) are enriched in basic and acidic residues.

It belongs to the RNA polymerase beta chain family. The RNAP catalytic core consists of 2 alpha, 1 beta, 1 beta' and 1 omega subunit. When a sigma factor is associated with the core the holoenzyme is formed, which can initiate transcription.

The catalysed reaction is RNA(n) + a ribonucleoside 5'-triphosphate = RNA(n+1) + diphosphate. Functionally, DNA-dependent RNA polymerase catalyzes the transcription of DNA into RNA using the four ribonucleoside triphosphates as substrates. The chain is DNA-directed RNA polymerase subunit beta from Streptococcus thermophilus (strain CNRZ 1066).